The primary structure comprises 602 residues: Elongation factor 4 (602 aa).

A tr-type G domain is found at 8–189; sequence KNIRNFSIIA…KIITTIPAPS (182 aa). Residues 20–25 and 136–139 contribute to the GTP site; these read DHGKST and NKID.

It belongs to the TRAFAC class translation factor GTPase superfamily. Classic translation factor GTPase family. LepA subfamily.

It localises to the cell inner membrane. It carries out the reaction GTP + H2O = GDP + phosphate + H(+). Required for accurate and efficient protein synthesis under certain stress conditions. May act as a fidelity factor of the translation reaction, by catalyzing a one-codon backward translocation of tRNAs on improperly translocated ribosomes. Back-translocation proceeds from a post-translocation (POST) complex to a pre-translocation (PRE) complex, thus giving elongation factor G a second chance to translocate the tRNAs correctly. Binds to ribosomes in a GTP-dependent manner. This chain is Elongation factor 4, found in Helicobacter pylori (strain Shi470).